The primary structure comprises 124 residues: Small ribosomal subunit protein uS12cz/uS12cy (124 aa).

Belongs to the universal ribosomal protein uS12 family. In terms of assembly, part of the 30S ribosomal subunit.

The protein localises to the plastid. Its function is as follows. With S4 and S5 plays an important role in translational accuracy. Located at the interface of the 30S and 50S subunits. This chain is Small ribosomal subunit protein uS12cz/uS12cy (rps12-A), found in Epifagus virginiana (Beechdrops).